Consider the following 73-residue polypeptide: Conotoxin Lt9a (73 aa).

An N-terminal signal peptide occupies residues 1-23; sequence MTLTKSAVLILVLLLAFDNFADV. Residues 24-40 constitute a propeptide that is removed on maturation; that stretch reads QPGLITMGGGRLSNLLS. 3 disulfides stabilise this stretch: Cys48–Cys62, Cys53–Cys64, and Cys59–Cys69.

Belongs to the conotoxin P superfamily. In terms of tissue distribution, expressed by the venom duct.

Its subcellular location is the secreted. In terms of biological role, probable neurotoxin that inhibits ion channels. This Conus litteratus (Lettered cone) protein is Conotoxin Lt9a.